The sequence spans 881 residues: MAVDSTDQRRDFVVRIDGEDNGDSEKFWRESSINFWHNDKSSKPPGGEEDDGSFDFMRRSSEKSEEPDPPSKLINQFLNKQKASGDEISLDMEANMPELQKNTVPPLSSTAVSGSASPVTAPVTASYRNGTGDAIRRRQNRVTLSPSVKDGDSSEDEENRVDGSEVVKCTSNRSTMRTKTLMKMKTRSRLMDPPTPTYPDMVSGRTPRSGNLNPGFSGRNTKPGTPNQGGSKDLEEEEDPFSEEDLPEGLRKEKICVWVIIEWIFLILIIASLICSLVIPYLRGKTLWDLALWKWEVMVLVLICGRLVSSWIVKLFVYFVESNFLWRKKVLYFVYGIRKPVQNCLWLGLVLIAWHFLFDKKVEREMRSTVLKYVTKVLICLLVAVIIWLIKTLLVKVLASSFHMSTYFDRIQESLFTQYVIETLSGPPRIEIHIEEEKVANDVKTFEIVGRKLSPLGPKAVSSPPQVTVGSGRLQKSPSRVGKSPVLSRSGSKKEGGEEGIRIDHLQRMNTKNVSAWKMKKLMNVIKKGTLSTLDEQIQDTTTQEDDKATQIRSEFEAKLAARKIFQNVAEPGSRYIYMEDFMRFLSEDESERAMDLFEGASECHKISKSCLKNWVVNAFRERRALALTLNDTKTAVNRLHRIVDVLVSIVILIIWLLILGIATTKFLLVISSQLLLVVFVFGNSCKTIFEAVIFVFVMHPFDVGDRCEIDGVQMIVEEMNILTTVFLRFDNQKIVYPNSLLGTKPIANYYRSPDMQDAIEFFVHIATPPEKTTALRQRILSYVDNKKDHWHPSPMIVFRDMCGLNSVKIAMWPTHKMNHQNMGERYVRRGQLLEEIGRLCRELDIEYRLYPLNINVKSLPAATPITSDRIPPSWNQQRSV.

Residues 35 to 245 are disordered; the sequence is FWHNDKSSKP…EEEDPFSEED (211 aa). Over residues 56-66 the composition is skewed to basic and acidic residues; the sequence is FMRRSSEKSEE. 3 stretches are compositionally biased toward polar residues: residues 73–82, 100–118, and 206–230; these read LINQFLNKQK, QKNTVPPLSSTAVSGSASP, and TPRSGNLNPGFSGRNTKPGTPNQGG. Acidic residues predominate over residues 234–245; it reads LEEEEDPFSEED. 4 helical membrane passes run 255-275, 297-317, 339-359, and 377-397; these read ICVWVIIEWIFLILIIASLIC, VMVLVLICGRLVSSWIVKLFV, KPVQNCLWLGLVLIAWHFLFD, and VLICLLVAVIIWLIKTLLVKV. Residues 457–501 are disordered; sequence GPKAVSSPPQVTVGSGRLQKSPSRVGKSPVLSRSGSKKEGGEEGI. Polar residues predominate over residues 463 to 478; the sequence is SPPQVTVGSGRLQKSP. Residues 492-501 show a composition bias toward basic and acidic residues; it reads SKKEGGEEGI. 2 helical membrane-spanning segments follow: residues 643–663 and 678–698; these read IVDVLVSIVILIIWLLILGIA and VVFVFGNSCKTIFEAVIFVFV.

Belongs to the MscS (TC 1.A.23) family.

It is found in the membrane. Mechanosensitive channel that opens in response to stretch forces in the membrane lipid bilayer. The chain is Mechanosensitive ion channel protein 4 (MSL4) from Arabidopsis thaliana (Mouse-ear cress).